We begin with the raw amino-acid sequence, 236 residues long: 2-C-methyl-D-erythritol 4-phosphate cytidylyltransferase (236 aa).

It belongs to the IspD/TarI cytidylyltransferase family. IspD subfamily. In terms of assembly, homodimer.

The enzyme catalyses 2-C-methyl-D-erythritol 4-phosphate + CTP + H(+) = 4-CDP-2-C-methyl-D-erythritol + diphosphate. Its pathway is isoprenoid biosynthesis; isopentenyl diphosphate biosynthesis via DXP pathway; isopentenyl diphosphate from 1-deoxy-D-xylulose 5-phosphate: step 2/6. Its function is as follows. Catalyzes the formation of 4-diphosphocytidyl-2-C-methyl-D-erythritol from CTP and 2-C-methyl-D-erythritol 4-phosphate (MEP). The polypeptide is 2-C-methyl-D-erythritol 4-phosphate cytidylyltransferase (Salmonella schwarzengrund (strain CVM19633)).